The following is a 250-amino-acid chain: MQKKSIIIPALDLIDGNVVRLHQGDYAKQTTYSDNPIEQFANYLAQGAEQLHLVDLTGAKDPAKRQTALIGKIIAETNCQIQVGGGIRTEQDVADLLAVGANRVVIGSTAVKDRAMVKGWFEKYGAEKFVLALDVNIDASGQKIIAISGWQEASGVSLEELIEDYQVVGLQHVLCTDISRDGTLAGSNVNLYREICAKYPKIHFQSSGGIGSLDDIKALKGTGVSGVIVGRALLEGKFNVAEAIECWQNG.

Asp-12 (proton acceptor) is an active-site residue. The active-site Proton donor is the Asp-134.

The protein belongs to the HisA/HisF family.

Its subcellular location is the cytoplasm. The catalysed reaction is 1-(5-phospho-beta-D-ribosyl)-5-[(5-phospho-beta-D-ribosylamino)methylideneamino]imidazole-4-carboxamide = 5-[(5-phospho-1-deoxy-D-ribulos-1-ylimino)methylamino]-1-(5-phospho-beta-D-ribosyl)imidazole-4-carboxamide. It participates in amino-acid biosynthesis; L-histidine biosynthesis; L-histidine from 5-phospho-alpha-D-ribose 1-diphosphate: step 4/9. The chain is 1-(5-phosphoribosyl)-5-[(5-phosphoribosylamino)methylideneamino] imidazole-4-carboxamide isomerase from Actinobacillus pleuropneumoniae serotype 3 (strain JL03).